A 291-amino-acid chain; its full sequence is Putative transport permease ycf38 (291 aa).

A run of 6 helical transmembrane segments spans residues 47–67, 87–107, 135–155, 165–185, 195–215, and 262–282; these read ATLM…GGLF, SGII…PLMF, FMTC…LFMG, MIFG…SLAL, LLAF…ALAP, and ICLG…AYLV. The ABC transmembrane type-2 domain maps to 47-289; sequence ATLMAGIIQP…YLVSNILKAK (243 aa).

It belongs to the ABC-2 integral membrane protein family.

It localises to the plastid. The protein localises to the chloroplast membrane. In Pyropia yezoensis (Susabi-nori), this protein is Putative transport permease ycf38 (ycf38).